Reading from the N-terminus, the 322-residue chain is 2-oxoglutarate-dependent dioxygenase caaD (322 aa).

The 108-residue stretch at 172–279 (TGNAAMFLKL…FAVPAFWHGD (108 aa)) folds into the Fe2OG dioxygenase domain. Fe cation is bound by residues His-200, Asp-202, and His-259. Arg-269 is a 2-oxoglutarate binding site.

Belongs to the iron/ascorbate-dependent oxidoreductase family. Fe(2+) is required as a cofactor.

It functions in the pathway secondary metabolite biosynthesis. Functionally, 2-oxoglutarate-dependent dioxygenase; part of the gene cluster that produces the acyltetronic acid derivatives carlosic acid, agglomerin F and carlosic acid methyl ether. CaaD catalyzes the sequential oxidations of the terminal C-10 methyl group of the caaC product to form carboxylic acid which is necessary for the biosynthesis of agglomerin F. The sequence is that of 2-oxoglutarate-dependent dioxygenase caaD from Aspergillus niger (strain ATCC MYA-4892 / CBS 513.88 / FGSC A1513).